We begin with the raw amino-acid sequence, 295 residues long: Dual specificity protein phosphatase 15 (295 aa).

The region spanning 1-141 is the Tyrosine-protein phosphatase domain; the sequence is MTEGVLPGLY…LEEFGWASSQ (141 aa). Residue T2 is the site of N-myristoyl glycine attachment. C85 (phosphocysteine intermediate) is an active-site residue. Residues 251 to 270 show a composition bias toward polar residues; sequence SSSCTLSASTERPDGSSTPG. Positions 251-272 are disordered; sequence SSSCTLSASTERPDGSSTPGNP.

This sequence belongs to the protein-tyrosine phosphatase family. Non-receptor class dual specificity subfamily. As to expression, highly expressed in testis. Expressed in brain; up-regulated in patients with multiple sclerosis gray matter lesions.

Its subcellular location is the cytoplasm. The protein localises to the cell membrane. The catalysed reaction is O-phospho-L-tyrosyl-[protein] + H2O = L-tyrosyl-[protein] + phosphate. The enzyme catalyses O-phospho-L-seryl-[protein] + H2O = L-seryl-[protein] + phosphate. It catalyses the reaction O-phospho-L-threonyl-[protein] + H2O = L-threonyl-[protein] + phosphate. Its function is as follows. May dephosphorylate MAPK13, ATF2, ERBB3, PDGFRB and SNX6. May play a role in the regulation of oligodendrocyte differentiation. May play a role in the regulation of myelin formation. Involved in the regulation of Erk1/2 phosphorylation in Schwann cells; the signaling may be linked to the regulation of myelination. The chain is Dual specificity protein phosphatase 15 from Homo sapiens (Human).